We begin with the raw amino-acid sequence, 197 residues long: GTP cyclohydrolase 1 (197 aa).

Positions 85, 88, and 156 each coordinate Zn(2+).

Belongs to the GTP cyclohydrolase I family. Toroid-shaped homodecamer, composed of two pentamers of five dimers.

The catalysed reaction is GTP + H2O = 7,8-dihydroneopterin 3'-triphosphate + formate + H(+). Its pathway is cofactor biosynthesis; 7,8-dihydroneopterin triphosphate biosynthesis; 7,8-dihydroneopterin triphosphate from GTP: step 1/1. The sequence is that of GTP cyclohydrolase 1 from Mesorhizobium japonicum (strain LMG 29417 / CECT 9101 / MAFF 303099) (Mesorhizobium loti (strain MAFF 303099)).